The sequence spans 481 residues: ATP synthase subunit beta (481 aa).

167-174 (GGAGVGKT) contacts ATP.

This sequence belongs to the ATPase alpha/beta chains family. F-type ATPases have 2 components, CF(1) - the catalytic core - and CF(0) - the membrane proton channel. CF(1) has five subunits: alpha(3), beta(3), gamma(1), delta(1), epsilon(1). CF(0) has three main subunits: a(1), b(2) and c(9-12). The alpha and beta chains form an alternating ring which encloses part of the gamma chain. CF(1) is attached to CF(0) by a central stalk formed by the gamma and epsilon chains, while a peripheral stalk is formed by the delta and b chains.

The protein resides in the cell membrane. It catalyses the reaction ATP + H2O + 4 H(+)(in) = ADP + phosphate + 5 H(+)(out). Functionally, produces ATP from ADP in the presence of a proton gradient across the membrane. The catalytic sites are hosted primarily by the beta subunits. The sequence is that of ATP synthase subunit beta from Corynebacterium jeikeium (strain K411).